The chain runs to 378 residues: Chorismate synthase (378 aa).

The interval Glu-37–Glu-60 is disordered. Residue Arg-47 coordinates NADP(+). FMN contacts are provided by residues Arg-124–Ser-126, Gly-289, Lys-304–Thr-308, and Arg-330.

Belongs to the chorismate synthase family. In terms of assembly, homotetramer. Requires FMNH2 as cofactor.

The enzyme catalyses 5-O-(1-carboxyvinyl)-3-phosphoshikimate = chorismate + phosphate. It functions in the pathway metabolic intermediate biosynthesis; chorismate biosynthesis; chorismate from D-erythrose 4-phosphate and phosphoenolpyruvate: step 7/7. Its function is as follows. Catalyzes the anti-1,4-elimination of the C-3 phosphate and the C-6 proR hydrogen from 5-enolpyruvylshikimate-3-phosphate (EPSP) to yield chorismate, which is the branch point compound that serves as the starting substrate for the three terminal pathways of aromatic amino acid biosynthesis. This reaction introduces a second double bond into the aromatic ring system. In Leptospira biflexa serovar Patoc (strain Patoc 1 / Ames), this protein is Chorismate synthase.